Reading from the N-terminus, the 303-residue chain is Major fimbrium anchoring subunit FimB (303 aa).

A signal peptide spans 1–22 (MNDAKKYIVSVLILLVAGMFGG). C23 is lipidated: N-palmitoyl cysteine. C23 carries S-diacylglycerol cysteine lipidation.

The protein belongs to the bacteroidetes fimbrillin superfamily. FimB/Mfa2 family. As to quaternary structure, fimB is not part of the fimbrium itself, but anchors the fimbrium in the outer membrane. Linear, head-to-tail oligomerization of fimbrial subunits mediates assembly of the fimbrium stalk, while the minor components FimC, FimD and FimE probably form the fimbrium tip. The anchoring subunit FimB limits fimbrium length and is important for solid fimbrium attachment to the outer membrane. In its absence, the major fimbriae become very long and are easily detached from the membrane.

It localises to the cell outer membrane. Its function is as follows. Anchoring subunit of the major fimbriae. Regulates fimbrial length. These filamentous pili are attached to the cell surface; they mediate biofilm formation, adhesion onto host cells and onto other bacteria that are part of the oral microbiome. Fimbriae of P.gingivalis are major virulence factors. The chain is Major fimbrium anchoring subunit FimB from Porphyromonas gingivalis (strain ATCC 33277 / DSM 20709 / CIP 103683 / JCM 12257 / NCTC 11834 / 2561).